The primary structure comprises 275 residues: Phosphonoacetaldehyde hydrolase (275 aa).

Asp15 acts as the Nucleophile in catalysis. Mg(2+) is bound by residues Asp15 and Ala17. Residue Lys56 is the Schiff-base intermediate with substrate of the active site. Position 189 (Asp189) interacts with Mg(2+).

This sequence belongs to the HAD-like hydrolase superfamily. PhnX family. In terms of assembly, homodimer. The cofactor is Mg(2+).

The catalysed reaction is phosphonoacetaldehyde + H2O = acetaldehyde + phosphate + H(+). Its activity is regulated as follows. Inhibited by phosphite, moderately inhibited by phosphonic acids, the corresponding aminophosphonic acids activate the enzyme. Involved in phosphonate degradation. This is Phosphonoacetaldehyde hydrolase from Pseudomonas aeruginosa (strain ATCC 15692 / DSM 22644 / CIP 104116 / JCM 14847 / LMG 12228 / 1C / PRS 101 / PAO1).